Reading from the N-terminus, the 822-residue chain is Collagen alpha chain CG42342 (822 aa).

Disordered stretches follow at residues 1 to 45 (MRKH…VEAP) and 66 to 99 (RLAPPPCQHPINNSNNNSNISNNSSNSSSSKERP). The Cytoplasmic segment spans residues 1–104 (MRKHKAPPSG…SKERPRPTVR (104 aa)). The segment covering 11–25 (SPRTMAQDNSQSEPS) has biased composition (polar residues). Residues 76 to 94 (INNSNNNSNISNNSSNSSS) show a composition bias toward low complexity. A helical; Signal-anchor for type II membrane protein membrane pass occupies residues 105–125 (FISLLHVASYVLCLCAFSFAL). The Extracellular segment spans residues 126 to 822 (YGNVRQTRLE…EYQDNLHNNE (697 aa)). Positions 131–162 (QTRLEQRMQRLQQLDARIVELELRLEQQQLLH) form a coiled coil. Disordered regions lie at residues 169 to 188 (QVLASHPSDRDSSNSNNGSQ), 205 to 297 (VSHL…GHPG), and 345 to 822 (LKGE…HNNE). A coiled-coil region spans residues 194–222 (VRRELHRLRRDVSHLQLTRRQQRRQAAEA). Collagen-like domains lie at 241–299 (QPGP…PGMD), 350–409 (GEPG…KGDR), 430–469 (GPPGPAGPPGPPGEPGARGEPGPIGPAGPPGEKGPRGKRG), 493–526 (RGPPGPPGIAGKDGRDGRDGSKGEPGEPGEPGSL), 527–586 (GPRG…KGDK), 621–680 (GPPG…SGKA), and 681–740 (GIPG…KGEQ). Over residues 242 to 251 (PGPPGPPGPP) the composition is skewed to pro residues. Positions 284-293 (PGDKGQKGDV) are enriched in basic and acidic residues. Residues 360–402 (EAGQPGAPGERGPPGEIGAQGPQGEAGQPGVAGPPGVAGAPGT) show a composition bias toward low complexity. A compositionally biased stretch (basic and acidic residues) spans 403-412 (KGDKGDRGDR). Residues 431–443 (PPGPAGPPGPPGE) show a composition bias toward pro residues. Over residues 504 to 517 (KDGRDGRDGSKGEP) the composition is skewed to basic and acidic residues. Over residues 522 to 540 (EPGSLGPRGLDGLPGEPGI) the composition is skewed to low complexity. Pro residues predominate over residues 567-579 (LMGPPGLPGPPGY). Residues 583–602 (KGDKGDRGDSYRKMRRRQDD) show a composition bias toward basic and acidic residues. Residues 619–628 (PPGPPGPMGP) show a composition bias toward pro residues. Positions 638 to 655 (RGLDGRKGDPGEKGHKGD) are enriched in basic and acidic residues. Low complexity predominate over residues 658–668 (PMGLPGPMGMR). Residues 790 to 822 (TSDYEQEEEEDDEQAEDNENEYDEYQDNLHNNE) are a coiled coil. Residues 793-815 (YEQEEEEDDEQAEDNENEYDEYQ) are compositionally biased toward acidic residues.

It is found in the cell membrane. The protein is Collagen alpha chain CG42342 of Drosophila melanogaster (Fruit fly).